Here is a 485-residue protein sequence, read N- to C-terminus: Ribulose bisphosphate carboxylase large chain (485 aa).

The propeptide occupies 1 to 2 (MS). Pro-3 is subject to N-acetylproline. Lys-14 is subject to N6,N6,N6-trimethyllysine. Substrate contacts are provided by Asn-123 and Thr-173. Lys-175 serves as the catalytic Proton acceptor. Residue Lys-177 coordinates substrate. Mg(2+)-binding residues include Lys-201, Asp-203, and Glu-204. The residue at position 201 (Lys-201) is an N6-carboxylysine. His-294 acts as the Proton acceptor in catalysis. Substrate-binding residues include Arg-295, His-327, and Ser-379.

This sequence belongs to the RuBisCO large chain family. Type I subfamily. In terms of assembly, heterohexadecamer of 8 large chains and 8 small chains; disulfide-linked. The disulfide link is formed within the large subunit homodimers. It depends on Mg(2+) as a cofactor. The disulfide bond which can form in the large chain dimeric partners within the hexadecamer appears to be associated with oxidative stress and protein turnover.

The protein resides in the plastid. It localises to the chloroplast. The enzyme catalyses 2 (2R)-3-phosphoglycerate + 2 H(+) = D-ribulose 1,5-bisphosphate + CO2 + H2O. The catalysed reaction is D-ribulose 1,5-bisphosphate + O2 = 2-phosphoglycolate + (2R)-3-phosphoglycerate + 2 H(+). Its function is as follows. RuBisCO catalyzes two reactions: the carboxylation of D-ribulose 1,5-bisphosphate, the primary event in carbon dioxide fixation, as well as the oxidative fragmentation of the pentose substrate in the photorespiration process. Both reactions occur simultaneously and in competition at the same active site. The chain is Ribulose bisphosphate carboxylase large chain from Helianthus annuus (Common sunflower).